A 147-amino-acid chain; its full sequence is Large ribosomal subunit protein uL15 (147 aa).

The tract at residues Met-1 to Arg-42 is disordered. A compositionally biased stretch (basic and acidic residues) spans Lys-15–Lys-28.

The protein belongs to the universal ribosomal protein uL15 family. In terms of assembly, part of the 50S ribosomal subunit.

In terms of biological role, binds to the 23S rRNA. The chain is Large ribosomal subunit protein uL15 from Nocardia farcinica (strain IFM 10152).